The chain runs to 399 residues: C-type lectin domain family 4 member M (399 aa).

At Met1–Gly49 the chain is on the cytoplasmic side. The Endocytosis signal motif lies at Leu14–Leu15. The chain crosses the membrane as a helical; Signal-anchor for type II membrane protein span at residues Pro50–Val70. The Extracellular segment spans residues Gln71–Glu399. The N-linked (GlcNAc...) asparagine glycan is linked to Asn92. A run of 7 repeats spans residues Lys108–Ser130, Arg131–Ser153, Arg154–Ser176, Lys177–Ser199, Lys200–Ser222, Lys223–Ser245, and Lys246–Cys268. The interval Lys108–Pro269 is 7 X approximate tandem repeats. 4 disulfides stabilise this stretch: Cys265–Cys395, Cys268–Cys279, Cys296–Cys389, and Cys368–Cys381. The region spanning Phe274–Lys390 is the C-type lectin domain. Residues Glu359, Asn361, Ser363, Glu366, Asn377, and Asp378 each contribute to the Ca(2+) site. A glycan (N-linked (GlcNAc...) asparagine) is linked at Asn361.

As to quaternary structure, homotetramer.

Its subcellular location is the membrane. In terms of biological role, probable pathogen-recognition receptor involved in peripheral immune surveillance in liver. May mediate the endocytosis of pathogens which are subsequently degraded in lysosomal compartments. Probably recognizes in a calcium-dependent manner high mannose N-linked oligosaccharides in a variety of pathogen antigens. Is a receptor for ICAM3, probably by binding to mannose-like carbohydrates. The chain is C-type lectin domain family 4 member M (CLEC4M) from Nomascus concolor (Black crested gibbon).